A 49-amino-acid chain; its full sequence is Small, acid-soluble spore protein O (49 aa).

The tract at residues 1–49 (MGKRKANHTISGMNVASAQGQGTGYNEEFANEPLTPAERQNNKKRKKNQ) is disordered. Positions 8–20 (HTISGMNVASAQG) are enriched in polar residues.

Belongs to the SspO family.

Its subcellular location is the spore core. The polypeptide is Small, acid-soluble spore protein O (Bacillus cereus (strain G9842)).